The chain runs to 475 residues: Ribulose bisphosphate carboxylase large chain (475 aa).

Residues 1–2 (MS) constitute a propeptide that is removed on maturation. An N-acetylproline modification is found at Pro-3. Lys-14 bears the N6,N6,N6-trimethyllysine mark. 2 residues coordinate substrate: Asn-123 and Thr-173. The active-site Proton acceptor is the Lys-175. Lys-177 serves as a coordination point for substrate. Lys-201, Asp-203, and Glu-204 together coordinate Mg(2+). Position 201 is an N6-carboxylysine (Lys-201). Residue His-294 is the Proton acceptor of the active site. Substrate-binding residues include Arg-295, His-327, and Ser-379.

It belongs to the RuBisCO large chain family. Type I subfamily. Heterohexadecamer of 8 large chains and 8 small chains. It depends on Mg(2+) as a cofactor.

The protein localises to the plastid. It localises to the chloroplast. The catalysed reaction is 2 (2R)-3-phosphoglycerate + 2 H(+) = D-ribulose 1,5-bisphosphate + CO2 + H2O. It carries out the reaction D-ribulose 1,5-bisphosphate + O2 = 2-phosphoglycolate + (2R)-3-phosphoglycerate + 2 H(+). Functionally, ruBisCO catalyzes two reactions: the carboxylation of D-ribulose 1,5-bisphosphate, the primary event in carbon dioxide fixation, as well as the oxidative fragmentation of the pentose substrate in the photorespiration process. Both reactions occur simultaneously and in competition at the same active site. The polypeptide is Ribulose bisphosphate carboxylase large chain (Bazzania trilobata (Greater whipwort)).